The primary structure comprises 353 residues: Photosystem II protein D1 (353 aa).

Position 2 is an N-acetylthreonine (threonine 2). Threonine 2 carries the post-translational modification Phosphothreonine. The next 3 membrane-spanning stretches (helical) occupy residues 29–46 (YIGW…TATS), 118–133 (HFLL…EWEL), and 142–156 (WIAV…AATA). Residue histidine 118 coordinates chlorophyll a. Tyrosine 126 lines the pheophytin a pocket. Residues aspartate 170 and glutamate 189 each coordinate [CaMn4O5] cluster. A helical transmembrane segment spans residues 197–218 (FHMLGVAGVFGSSLFSAMHGSL). Histidine 198 contributes to the chlorophyll a binding site. Residues histidine 215 and 264-265 (SF) each bind a quinone. Fe cation is bound at residue histidine 215. Histidine 272 serves as a coordination point for Fe cation. Residues 274-288 (FLAAWPVVGIWFTAL) traverse the membrane as a helical segment. Histidine 332, glutamate 333, aspartate 342, and alanine 344 together coordinate [CaMn4O5] cluster. A propeptide spanning residues 345–353 (AMEAPSVNG) is cleaved from the precursor.

It belongs to the reaction center PufL/M/PsbA/D family. As to quaternary structure, PSII is composed of 1 copy each of membrane proteins PsbA, PsbB, PsbC, PsbD, PsbE, PsbF, PsbH, PsbI, PsbJ, PsbK, PsbL, PsbM, PsbT, PsbX, PsbY, PsbZ, Psb30/Ycf12, at least 3 peripheral proteins of the oxygen-evolving complex and a large number of cofactors. It forms dimeric complexes. The cofactor is The D1/D2 heterodimer binds P680, chlorophylls that are the primary electron donor of PSII, and subsequent electron acceptors. It shares a non-heme iron and each subunit binds pheophytin, quinone, additional chlorophylls, carotenoids and lipids. D1 provides most of the ligands for the Mn4-Ca-O5 cluster of the oxygen-evolving complex (OEC). There is also a Cl(-1) ion associated with D1 and D2, which is required for oxygen evolution. The PSII complex binds additional chlorophylls, carotenoids and specific lipids.. Tyr-161 forms a radical intermediate that is referred to as redox-active TyrZ, YZ or Y-Z. Post-translationally, C-terminally processed by CTPA; processing is essential to allow assembly of the oxygen-evolving complex and thus photosynthetic growth.

The protein resides in the plastid. The protein localises to the chloroplast thylakoid membrane. It catalyses the reaction 2 a plastoquinone + 4 hnu + 2 H2O = 2 a plastoquinol + O2. In terms of biological role, photosystem II (PSII) is a light-driven water:plastoquinone oxidoreductase that uses light energy to abstract electrons from H(2)O, generating O(2) and a proton gradient subsequently used for ATP formation. It consists of a core antenna complex that captures photons, and an electron transfer chain that converts photonic excitation into a charge separation. The D1/D2 (PsbA/PsbD) reaction center heterodimer binds P680, the primary electron donor of PSII as well as several subsequent electron acceptors. This is Photosystem II protein D1 from Vigna unguiculata (Cowpea).